A 109-amino-acid chain; its full sequence is MQQFEWIHAAWLAVAIVLEIIANVFLKFSDGFRRKVYGILSLAAVLGAFSALSQAVKGIDLSVAYALWGGFGIAATIAAGWVLFGQRLNNKGWAGLILLVAGMVLIKLA.

4 helical membrane-spanning segments follow: residues 6 to 26 (WIHA…NVFL), 36 to 56 (VYGI…SQAV), 64 to 84 (AYAL…WVLF), and 88 to 108 (LNNK…LIKL).

The protein belongs to the drug/metabolite transporter (DMT) superfamily. Small multidrug resistance (SMR) (TC 2.A.7.1) family. MdtI subfamily. In terms of assembly, forms a complex with MdtJ.

It is found in the cell inner membrane. Functionally, catalyzes the excretion of spermidine. The chain is Spermidine export protein MdtI from Klebsiella pneumoniae (strain 342).